A 471-amino-acid polypeptide reads, in one-letter code: 7-hydroxymethyl chlorophyll a reductase, chloroplastic (471 aa).

The transit peptide at 1–44 directs the protein to the chloroplast; it reads MARCISFLSTSSSLPCATKPPCCSVSSVLPSSPSSHQCRGRKTS.

This sequence belongs to the FrhB family. The cofactor is FAD. Iron-sulfur cluster is required as a cofactor.

It is found in the plastid. It localises to the chloroplast. The enzyme catalyses chlorophyll a + 2 oxidized [2Fe-2S]-[ferredoxin] + H2O = 7(1)-hydroxychlorophyll a + 2 reduced [2Fe-2S]-[ferredoxin] + 2 H(+). In terms of biological role, probable iron-sulfur flavoprotein that converts 7-hydroxymethyl chlorophyll a to chlorophyll a using ferredoxin as a reducing equivalent. Catalyzes the reduction of a hydroxymethyl group to a methyl group. The protein is 7-hydroxymethyl chlorophyll a reductase, chloroplastic (HCAR) of Oryza sativa subsp. japonica (Rice).